A 342-amino-acid polypeptide reads, in one-letter code: Signaling lymphocytic activation molecule (342 aa).

The signal sequence occupies residues Met1–Gly26. Residues Glu27–Gln237 lie on the Extracellular side of the membrane. In terms of domain architecture, Ig-like V-type spans Leu29–Tyr138. 7 N-linked (GlcNAc...) asparagine glycosylation sites follow: Asn57, Asn102, Asn125, Asn150, Asn157, Asn189, and Asn217. The region spanning Pro144–Asn223 is the Ig-like C2-type domain. Disulfide bonds link Cys158–Cys228 and Cys164–Cys209. Residues Trp238 to Leu261 traverse the membrane as a helical segment. Over Leu262 to Ser342 the chain is Cytoplasmic. Positions Thr282–Val287 match the ITSM 1 motif. 3 positions are modified to phosphotyrosine; by FYN: Tyr284, Tyr310, and Tyr334. Residues Tyr310–Glu315 carry the SH2-binding motif. The ITSM 2 motif lies at Thr332–Val337.

Interacts (via cytoplasmic domain) with SH2D1A and SH2D1B; SH2D1A mediates association with FYN. Interacts (via cytoplasmic domain phosphorylated on tyrosine residues) with INPP5D and PTPN11; presence of SH2D1A facilitates binding to INPP5D. Interacts with MAP4K1. Interacts with PIK3C3, BECN1 and UVRAG; indicative for an association with PI3K complex II (PI3KC3-C2). Interacts with canine distemper virus HN protein; suggesting that it may serve as a receptor. In terms of processing, phosphorylated on tyrosine residues by FYN.

It is found in the cell membrane. Self-ligand receptor of the signaling lymphocytic activation molecule (SLAM) family. SLAM receptors triggered by homo- or heterotypic cell-cell interactions are modulating the activation and differentiation of a wide variety of immune cells and thus are involved in the regulation and interconnection of both innate and adaptive immune response. Activities are controlled by presence or absence of small cytoplasmic adapter proteins, SH2D1A/SAP and/or SH2D1B/EAT-2. SLAMF1-induced signal-transduction events in T-lymphocytes are different from those in B-cells. Two modes of SLAMF1 signaling seem to exist: one depending on SH2D1A (and perhaps SH2D1B) and another in which protein-tyrosine phosphatase 2C (PTPN11)-dependent signal transduction operates. Initially it has been proposed that association with SH2D1A prevents binding to inhibitory effectors including INPP5D/SHIP1 and PTPN11/SHP-2. However, signaling is also regulated by SH2D1A which can simultaneously interact with and recruit FYN which subsequently phosphorylates and activates SLAMF1. Mediates IL-2-independent proliferation of activated T cells during immune responses and induces IFN-gamma production. Downstreaming signaling involves INPP5D/SHIP1, DOK1 and DOK2 leading to inhibited IFN-gamma production in T-cells, and PRKCQ, BCL10 and NFKB1 leading to increased T-cell activation and Th2 cytokine production. Promotes T-cell receptor-induced IL-4 secretion by CD4(+) cells. Inhibits antigen receptor-mediated production of IFN-gamma, but not IL-2, in CD4(-)/CD8(-) T-cells. Required for IL-4 production by germinal centers T follicular helper (T(Fh))cells. May inhibit CD40-induced signal transduction in monocyte-derived dendritic cells. May play a role in allergic responses and may regulate allergen-induced Th2 cytokine and Th1 cytokine secretion. In conjunction with SLAMF6 controls the transition between positive selection and the subsequent expansion and differentiation of the thymocytic natural killer T (NKT) cell lineage. Involved in the peripheral differentiation of indifferent natural killer T (iNKT) cells toward a regulatory NKT2 type. In macrophages involved in down-regulation of IL-12, TNF-alpha and nitric oxide in response to lipopolysaccharide (LPS). In B-cells activates the ERK signaling pathway independently of SH2D1A but implicating both, SYK and INPP5D, and activates Akt signaling dependent on SYK and SH2D1A. In conjunction with SLAMF5 and SLAMF6 may be a negative regulator of the humoral immune response. This is Signaling lymphocytic activation molecule (SLAMF1) from Canis lupus familiaris (Dog).